A 206-amino-acid chain; its full sequence is Imidazoleglycerol-phosphate dehydratase (206 aa).

Residues 1–21 (MTTPSTAPTPAPRKAEVSRNT) are disordered.

Belongs to the imidazoleglycerol-phosphate dehydratase family.

The protein localises to the cytoplasm. The catalysed reaction is D-erythro-1-(imidazol-4-yl)glycerol 3-phosphate = 3-(imidazol-4-yl)-2-oxopropyl phosphate + H2O. It functions in the pathway amino-acid biosynthesis; L-histidine biosynthesis; L-histidine from 5-phospho-alpha-D-ribose 1-diphosphate: step 6/9. This is Imidazoleglycerol-phosphate dehydratase from Polaromonas sp. (strain JS666 / ATCC BAA-500).